A 914-amino-acid polypeptide reads, in one-letter code: MASESSPLLAYRLLGEEGAAFPPNGAGVSGVPSSRKLSTFLGVVVPTVLSMFSIVVFLRIGFVVGHAGLLQALAMLLVAYIILALTVLSVCAIATNGAVRGGGAYFMISRTLGPEVGGSIGLMFYLANVCGCAVSLLGLVESILDVFGADATGSSGIQVLPQGYGWNLLYGSLLLGLVGGVCTLGAGLYARASFLTFLLVSGSLASVLVSFVAVGPRNIPLAPRPGTNASSVPHRHGHFTGFNGSTLRDNLGAGYAEDYTTGAMMTFASVFAVLFNGCTGIMAGANMSGELKDPSRAIPLGTIIAVAYTFFIYILLFFLSSFTCDRALLQEDYGFFRDISLWPPLVLIGIYATALSASMSSLIGASRILHALAQDDLFGVILAPAKVVSGGGNPWGAVLYSWGLVQLVLLAGKLNTLAAVVTVFYLVAYAAVDLSCLSLEWASAPNFRPTFSLFSWHTCLLGVASCLLMMFLISPGAAGGSLLLMGLLSALLTARGGPSSWGYVSQALLFHQVRKYLLRLDVRKEHVKFWRPQLLLLVGNPRGALPLLRLANQLKKGGLYVLGHVTLGDLDSLPSDPVQPQYGAWLSLVDLAQVKAFVDLTLSPSVRQGAQHLLRISGLGGMKPNTLVLGFYDDAPPQDHFLTDPAFSEPAEGTREGGSPALSTLFPPPRAPGSPRALSPQDYVATVADALKMNKNVVLARACGALPPERLSRGSSSSAQLHHVDVWPLNLLRPRGGPGYVDVCGLFLLQMATILSMVPAWHSARLRIFLCLGPREAPGAAEGRLRALLSQLRIRAEVQEVVWGEGAETGEPEEEEGDFVNGGRGDEEAEALACSANALVRAQQGRGTVGGPGGPEGRDGEEGPTTALTFLYLPRPPADPARYPRYLALLETLSRDLGPTLLIHGVTPVTCTDL.

Residues 1–36 (MASESSPLLAYRLLGEEGAAFPPNGAGVSGVPSSRK) are Cytoplasmic-facing. Ser6 carries the phosphoserine modification. The helical transmembrane segment at 37–57 (LSTFLGVVVPTVLSMFSIVVF) threads the bilayer. Topologically, residues 58–72 (LRIGFVVGHAGLLQA) are extracellular. Residues 73–93 (LAMLLVAYIILALTVLSVCAI) traverse the membrane as a helical segment. At 94–119 (ATNGAVRGGGAYFMISRTLGPEVGGS) the chain is on the cytoplasmic side. The chain crosses the membrane as a helical span at residues 120–140 (IGLMFYLANVCGCAVSLLGLV). Residues 141 to 167 (ESILDVFGADATGSSGIQVLPQGYGWN) lie on the Extracellular side of the membrane. Residues 168 to 188 (LLYGSLLLGLVGGVCTLGAGL) form a helical membrane-spanning segment. Residues 189–193 (YARAS) are Cytoplasmic-facing. The helical transmembrane segment at 194–214 (FLTFLLVSGSLASVLVSFVAV) threads the bilayer. At 215–262 (GPRNIPLAPRPGTNASSVPHRHGHFTGFNGSTLRDNLGAGYAEDYTTG) the chain is on the extracellular side. Residues Asn228 and Asn243 are each glycosylated (N-linked (GlcNAc...) asparagine). Residues 263 to 283 (AMMTFASVFAVLFNGCTGIMA) traverse the membrane as a helical segment. Residues 284-297 (GANMSGELKDPSRA) are Cytoplasmic-facing. A helical transmembrane segment spans residues 298–318 (IPLGTIIAVAYTFFIYILLFF). Residues 319–338 (LSSFTCDRALLQEDYGFFRD) lie on the Extracellular side of the membrane. Residues 339–359 (ISLWPPLVLIGIYATALSASM) traverse the membrane as a helical segment. Residues 360 to 376 (SSLIGASRILHALAQDD) lie on the Cytoplasmic side of the membrane. The chain crosses the membrane as a helical span at residues 377–399 (LFGVILAPAKVVSGGGNPWGAVL). Over 400–416 (YSWGLVQLVLLAGKLNT) the chain is Extracellular. A helical membrane pass occupies residues 417–437 (LAAVVTVFYLVAYAAVDLSCL). Topologically, residues 438–466 (SLEWASAPNFRPTFSLFSWHTCLLGVASC) are cytoplasmic. A helical transmembrane segment spans residues 467–487 (LLMMFLISPGAAGGSLLLMGL). Over 488-740 (LSALLTARGG…LLRPRGGPGY (253 aa)) the chain is Extracellular. The interval 645–678 (PAFSEPAEGTREGGSPALSTLFPPPRAPGSPRAL) is disordered. The chain crosses the membrane as a helical span at residues 741–761 (VDVCGLFLLQMATILSMVPAW). Residues 762–914 (HSARLRIFLC…GVTPVTCTDL (153 aa)) lie on the Cytoplasmic side of the membrane. The segment at 844-864 (QGRGTVGGPGGPEGRDGEEGP) is disordered.

Belongs to the SLC12A transporter family. As to quaternary structure, interacts with SLC12A1.

The protein resides in the cell membrane. It is found in the lysosome membrane. Functionally, may be an inhibitor of SLC12A1. Seems to correspond to a subunit of a multimeric transport system and thus, additional subunits may be required for its function. May play a role in lysosomal ion flux and osmoregulation. The protein is Solute carrier family 12 member 9 (Slc12a9) of Mus musculus (Mouse).